We begin with the raw amino-acid sequence, 853 residues long: Penicillin-binding protein 1A (853 aa).

The Cytoplasmic segment spans residues 1-6 (MRIAKL). Residues 7-27 (ILNTLLTLCILGLVAGGMLYF) form a helical; Signal-anchor for type II membrane protein membrane-spanning segment. Topologically, residues 28–853 (HLKSELQQPM…TPATQPQELF (826 aa)) are periplasmic. The segment at 37–205 (MQIYTADGKL…STMNPLYSLK (169 aa)) is transglycosylase. Glu-75 (proton donor; for transglycosylase activity) is an active-site residue. A transpeptidase region spans residues 387–681 (QRANGEWQLG…RVISGELAFL (295 aa)). Ser-441 serves as the catalytic Acyl-ester intermediate; for transpeptidase activity. The tract at residues 615-636 (NALKPTDDSTNGEELDQQPETV) is disordered.

The protein in the N-terminal section; belongs to the glycosyltransferase 51 family. This sequence in the C-terminal section; belongs to the transpeptidase family.

Its subcellular location is the cell inner membrane. The enzyme catalyses [GlcNAc-(1-&gt;4)-Mur2Ac(oyl-L-Ala-gamma-D-Glu-L-Lys-D-Ala-D-Ala)](n)-di-trans,octa-cis-undecaprenyl diphosphate + beta-D-GlcNAc-(1-&gt;4)-Mur2Ac(oyl-L-Ala-gamma-D-Glu-L-Lys-D-Ala-D-Ala)-di-trans,octa-cis-undecaprenyl diphosphate = [GlcNAc-(1-&gt;4)-Mur2Ac(oyl-L-Ala-gamma-D-Glu-L-Lys-D-Ala-D-Ala)](n+1)-di-trans,octa-cis-undecaprenyl diphosphate + di-trans,octa-cis-undecaprenyl diphosphate + H(+). It catalyses the reaction Preferential cleavage: (Ac)2-L-Lys-D-Ala-|-D-Ala. Also transpeptidation of peptidyl-alanyl moieties that are N-acyl substituents of D-alanine.. The protein operates within cell wall biogenesis; peptidoglycan biosynthesis. In terms of biological role, cell wall formation. Synthesis of cross-linked peptidoglycan from the lipid intermediates. The enzyme has a penicillin-insensitive transglycosylase N-terminal domain (formation of linear glycan strands) and a penicillin-sensitive transpeptidase C-terminal domain (cross-linking of the peptide subunits). The chain is Penicillin-binding protein 1A (mrcA) from Haemophilus influenzae (strain ATCC 51907 / DSM 11121 / KW20 / Rd).